A 209-amino-acid chain; its full sequence is MTKGILGKKVGMTQIFTESGELIPVTVVEATPNVVLQVKTVETDGYEAIQVGYQDKREVLSNKPAKGHVAKANTAPKRFIKEFKNVELGEYEVGKEIKVDVFQAGDVVDVTGTTKGKGFQGAIKRHGQSRGPMSHGSRYHRRPGSMGPVAPNRVFKNKRLAGRMGGDRVTIQNLEVVKVDVERNVILIKGNIPGAKKSLITIKSAVKAK.

A disordered region spans residues 118 to 151 (GFQGAIKRHGQSRGPMSHGSRYHRRPGSMGPVAP).

Belongs to the universal ribosomal protein uL3 family. Part of the 50S ribosomal subunit. Forms a cluster with proteins L14 and L19.

In terms of biological role, one of the primary rRNA binding proteins, it binds directly near the 3'-end of the 23S rRNA, where it nucleates assembly of the 50S subunit. The polypeptide is Large ribosomal subunit protein uL3 (Enterococcus faecalis (strain ATCC 700802 / V583)).